The sequence spans 353 residues: Colistin resistance protein EmrA (353 aa).

A helical membrane pass occupies residues 21-41 (WGVFSVLLLFLVAGILYYFFV). Positions 132-204 (VVAAQADLAR…QASRAQLLAD (73 aa)) form a coiled coil.

This sequence belongs to the membrane fusion protein (MFP) (TC 8.A.1) family.

It localises to the cell inner membrane. Its function is as follows. Probably part of an efflux pump system that contributes to adaptation to osmotic stress and resistance to colistin. This chain is Colistin resistance protein EmrA, found in Acinetobacter baumannii (strain ATCC 17978 / DSM 105126 / CIP 53.77 / LMG 1025 / NCDC KC755 / 5377).